The following is a 390-amino-acid chain: Succinate--CoA ligase [ADP-forming] subunit beta (390 aa).

The region spanning Lys9–Gln248 is the ATP-grasp domain. Residues Lys50, Gly57–Gly59, Glu103, Ile106, and Glu111 each bind ATP. Asn203 and Asp217 together coordinate Mg(2+). Substrate contacts are provided by residues Asn268 and Gly325–Val327.

Belongs to the succinate/malate CoA ligase beta subunit family. Heterotetramer of two alpha and two beta subunits. Mg(2+) serves as cofactor.

The catalysed reaction is succinate + ATP + CoA = succinyl-CoA + ADP + phosphate. It carries out the reaction GTP + succinate + CoA = succinyl-CoA + GDP + phosphate. It participates in carbohydrate metabolism; tricarboxylic acid cycle; succinate from succinyl-CoA (ligase route): step 1/1. In terms of biological role, succinyl-CoA synthetase functions in the citric acid cycle (TCA), coupling the hydrolysis of succinyl-CoA to the synthesis of either ATP or GTP and thus represents the only step of substrate-level phosphorylation in the TCA. The beta subunit provides nucleotide specificity of the enzyme and binds the substrate succinate, while the binding sites for coenzyme A and phosphate are found in the alpha subunit. The protein is Succinate--CoA ligase [ADP-forming] subunit beta of Leptospira borgpetersenii serovar Hardjo-bovis (strain JB197).